A 172-amino-acid polypeptide reads, in one-letter code: uncharacterized protein (172 aa).

This is an uncharacterized protein from Orgyia pseudotsugata (Douglas-fir tussock moth).